Here is a 1517-residue protein sequence, read N- to C-terminus: DNA-directed RNA polymerase subunit beta' (1517 aa).

Residues Cys-71, Cys-73, Cys-86, and Cys-89 each coordinate Zn(2+). The Mg(2+) site is built by Asp-482, Asp-484, and Asp-486. Zn(2+) is bound by residues Cys-812, Cys-886, Cys-893, and Cys-896.

This sequence belongs to the RNA polymerase beta' chain family. In terms of assembly, the RNAP catalytic core consists of 2 alpha, 1 beta, 1 beta' and 1 omega subunit. When a sigma factor is associated with the core the holoenzyme is formed, which can initiate transcription. Mg(2+) is required as a cofactor. Requires Zn(2+) as cofactor.

It catalyses the reaction RNA(n) + a ribonucleoside 5'-triphosphate = RNA(n+1) + diphosphate. DNA-dependent RNA polymerase catalyzes the transcription of DNA into RNA using the four ribonucleoside triphosphates as substrates. The chain is DNA-directed RNA polymerase subunit beta' from Campylobacter jejuni subsp. jejuni serotype O:23/36 (strain 81-176).